Reading from the N-terminus, the 592-residue chain is BTB/POZ domain-containing protein At5g03250 (592 aa).

One can recognise a BTB domain in the interval 28–98; the sequence is SDVTIEVGDM…CYGVKIELTA (71 aa). One can recognise an NPH3 domain in the interval 217-502; that stretch reads DWWFDDASFL…VQVLFFEQLR (286 aa). At Tyr-443 the chain carries Phosphotyrosine.

It belongs to the NPH3 family.

It participates in protein modification; protein ubiquitination. May act as a substrate-specific adapter of an E3 ubiquitin-protein ligase complex (CUL3-RBX1-BTB) which mediates the ubiquitination and subsequent proteasomal degradation of target proteins. This is BTB/POZ domain-containing protein At5g03250 from Arabidopsis thaliana (Mouse-ear cress).